Here is a 474-residue protein sequence, read N- to C-terminus: Viral protein TPX (474 aa).

The tract at residues 268–474 is disordered; sequence VTVTPISSPS…TPTSTTSSNI (207 aa). Residues 275–365 show a composition bias toward pro residues; that stretch reads SPSPTPTPTP…PTPTPTPTPT (91 aa). Residues 278 to 367 form a Thr-Pro(N) repeat; that stretch reads PTPTPTPTPT…PTPTPTPTPT (90 aa). The interval 278-467 is 3 Thr-Pro repeats regions and two near identical repeats; it reads PTPTPTPTPT…PTPTPTPTPT (190 aa). The segment at residues 368-377 is a repeat; sequence YDITYVVFDV. The stretch at 378–436 is one Thr-Pro(N) repeat; it reads TPSPTPTPTPTPTPTPTPTPTPTPTPTPTPTPTPTPTPTPTPTPTPTPTPTPTPTPTPT. The span at 380 to 434 shows a compositional bias: pro residues; sequence SPTPTPTPTPTPTPTPTPTPTPTPTPTPTPTPTPTPTPTPTPTPTPTPTPTPTPT. Positions 437–446 form a repeat; the sequence is YDITYVIFDV. A Thr-Pro(N) repeat occupies 447 to 467; that stretch reads TPSPTPTPTPTPTPTPTPTPT. The span at 449–465 shows a compositional bias: pro residues; sequence SPTPTPTPTPTPTPTPT.

The protein is Viral protein TPX of Thermoproteus tenax virus 1 (strain VT3) (TTV1).